Here is a 244-residue protein sequence, read N- to C-terminus: Carboxy-S-adenosyl-L-methionine synthase (244 aa).

S-adenosyl-L-methionine is bound by residues tyrosine 40, 65 to 67, 90 to 91, 119 to 120, asparagine 134, and arginine 201; these read GCS, DN, and DL.

It belongs to the class I-like SAM-binding methyltransferase superfamily. Cx-SAM synthase family. As to quaternary structure, homodimer.

The enzyme catalyses prephenate + S-adenosyl-L-methionine = carboxy-S-adenosyl-L-methionine + 3-phenylpyruvate + H2O. Catalyzes the conversion of S-adenosyl-L-methionine (SAM) to carboxy-S-adenosyl-L-methionine (Cx-SAM). The polypeptide is Carboxy-S-adenosyl-L-methionine synthase (Geobacter metallireducens (strain ATCC 53774 / DSM 7210 / GS-15)).